The chain runs to 677 residues: Pannexin-2 (677 aa).

Topologically, residues Met-11–Val-53 are cytoplasmic. The chain crosses the membrane as a helical span at residues Val-54–Phe-74. Topologically, residues Ala-75–Pro-125 are extracellular. A glycan (N-linked (GlcNAc...) asparagine) is linked at Asn-86. A helical membrane pass occupies residues Tyr-126–Ala-146. The Cytoplasmic portion of the chain corresponds to Ser-147–Arg-230. Residues His-231–Thr-251 traverse the membrane as a helical segment. Residues Gln-252–Asp-295 lie on the Extracellular side of the membrane. A helical membrane pass occupies residues Ile-296–Phe-316. At Arg-317 to Leu-617 the chain is on the cytoplasmic side. The span at Thr-394–Pro-408 shows a compositional bias: polar residues. Disordered regions lie at residues Thr-394–Lys-425 and Ala-485–His-512. A phosphoserine mark is found at Ser-593 and Ser-604.

It belongs to the pannexin family. In terms of assembly, homoheptameric. In terms of processing, S-palmitoylated in neural stem and progenitor cells. Post-translationally, cleaved by CASP3 and CASP7 during apoptosis. Cleavage has no effect on it function. Expression is enriched in central nervous system. Expressed in suprabasal layers of skin epidermis. In terms of tissue distribution, more aboundantly expressed in skin.

Its subcellular location is the cell membrane. It is found in the golgi apparatus membrane. The protein localises to the endoplasmic reticulum membrane. The enzyme catalyses ATP(in) = ATP(out). The catalysed reaction is chloride(in) = chloride(out). It carries out the reaction iodide(out) = iodide(in). It catalyses the reaction Na(+)(in) = Na(+)(out). The enzyme catalyses D-gluconate(in) = D-gluconate(out). In terms of biological role, ion channel with a slight anion preference. Also able to release ATP. Plays a role in regulating neurogenesis and apoptosis in keratinocytes. This chain is Pannexin-2 (Panx2), found in Mus musculus (Mouse).